We begin with the raw amino-acid sequence, 774 residues long: DNA ligase 3 (774 aa).

Residues 1–25 (MPPKKRMKNGSSLKSTSKKGEKSRN) form a disordered region. The active-site N6-AMP-lysine intermediate is K433.

Belongs to the ATP-dependent DNA ligase family.

It is found in the nucleus. It catalyses the reaction ATP + (deoxyribonucleotide)n-3'-hydroxyl + 5'-phospho-(deoxyribonucleotide)m = (deoxyribonucleotide)n+m + AMP + diphosphate.. This is DNA ligase 3 (adl1) from Schizosaccharomyces pombe (strain 972 / ATCC 24843) (Fission yeast).